We begin with the raw amino-acid sequence, 1254 residues long: Structural polyprotein (1254 aa).

The interval Met-1 to Phe-33 is necessary for nucleocapsid assembly and virus assembly. Positions Phe-33–Lys-68 are host transcription inhibition. The short motif at Leu-41–Leu-48 is the Supraphysiological nuclear export signal element. Positions Leu-48 to Met-119 are disordered. The short motif at Lys-64–Lys-68 is the Nuclear localization signal element. Composition is skewed to basic residues over residues Asn-79–Thr-93 and Gly-102–Met-117. The binding to the viral RNA stretch occupies residues Lys-91–Thr-126. A Phosphothreonine modification is found at Thr-93. Residues Pro-111 to Lys-125 form a ribosome-binding region. Phosphoserine is present on Ser-123. The region spanning Lys-125–Trp-274 is the Peptidase S3 domain. At Thr-126 the chain carries Phosphothreonine. The Charge relay system role is filled by His-151. Residues Lys-167–Tyr-172 are interaction with spike glycoprotein E2. Active-site charge relay system residues include Asp-173 and Ser-225. An interaction with spike glycoprotein E2 region spans residues Glu-259–Thr-263. Residues Ser-275–Val-286 form a functions as an uncleaved signal peptide for the precursor of protein E3/E2 region. The Extracellular segment spans residues Ser-275–Thr-700. 7 disulfide bridges follow: Cys-281–Cys-290, Cys-352–Cys-456, Cys-355–Cys-360, Cys-423–Cys-437, Cys-484–Cys-599, Cys-533–Cys-559, and Cys-535–Cys-553. An N-linked (GlcNAc...) asparagine; by host glycan is attached at Asn-285. Residue Asn-651 is glycosylated (N-linked (GlcNAc...) asparagine; by host). A helical membrane pass occupies residues Ile-701–Leu-721. The Cytoplasmic segment spans residues Phe-722–Ala-756. The tract at residues Lys-724–Ser-728 is interaction with the capsid protein. Residues Cys-729, Cys-749, and Cys-750 are each lipidated (S-palmitoyl cysteine; by host). Positions Cys-729 to Cys-749 are transient transmembrane before p62-6K protein processing. Cysteines 729 and 750 form a disulfide. Topologically, residues Glu-757 to Gln-771 are extracellular. A run of 2 helical transmembrane segments spans residues Gln-772–Arg-790 and Leu-791–Gly-811. Residues Ala-812 to Ser-1224 lie on the Extracellular side of the membrane. Disulfide bonds link Cys-861–Cys-926, Cys-874–Cys-906, Cys-875–Cys-908, and Cys-880–Cys-890. The segment at Val-896–Thr-913 is E1 fusion peptide loop. N-linked (GlcNAc...) asparagine; by host glycosylation is found at Asn-946 and Asn-1082. 4 disulfide bridges follow: Cys-1071–Cys-1083, Cys-1113–Cys-1188, Cys-1118–Cys-1192, and Cys-1140–Cys-1182. Residues Leu-1225–Met-1245 traverse the membrane as a helical segment. Topologically, residues Tyr-1246 to Asn-1254 are cytoplasmic.

Homodimer. Homomultimer. Interacts with host karyopherin KPNA4; this interaction allows the nuclear import of the viral capsid protein. Interacts with spike glycoprotein E2. Interacts with host IRAK1; the interaction leads to inhibition of IRAK1-dependent signaling. Part of a tetrameric complex composed of host CRM1, host importin alpha/beta dimer and the viral capsid; this complex blocks the receptor-mediated transport through the nuclear pore. Interacts with host phosphatase PPP1CA; this interaction dephosphorylates the capsid protein, which increases its ability to bind to the viral genome. In terms of assembly, the precursor of protein E3/E2 and E1 form a heterodimer shortly after synthesis. As to quaternary structure, interacts with spike glycoprotein E2. The precursor of protein E3/E2 and E1 form a heterodimer shortly after synthesis. Processing of the precursor of protein E3/E2 into E2 and E3 results in a heterodimer of the spike glycoproteins E2 and E1. Spike at virion surface are constituted of three E2-E1 heterodimers. After target cell attachment and endocytosis, E1 change conformation to form homotrimers. Interacts with 6K protein. Interacts with host LDLRAD3; this interaction mediates viral entry to the host cell. Interacts with spike glycoprotein E1. Processing of the precursor of protein E3/E2 into E2 and E3 results in a heterodimer of the spike glycoproteins E2 and E1. Spike at virion surface are constituted of a trimer of E2-E1 heterodimers. Interacts with 6K protein. Interacts with host LDLRAD3; this interaction mediates viral entry to the host cell. In terms of assembly, oligomer. Interacts with spike glycoprotein E1. Interacts with spike glycoprotein E2. Structural polyprotein: Specific enzymatic cleavages in vivo yield mature proteins. Capsid protein is auto-cleaved during polyprotein translation, unmasking a signal peptide at the N-terminus of the precursor of E3/E2. The remaining polyprotein is then targeted to the host endoplasmic reticulum, where host signal peptidase cleaves it into pE2, 6K and E1 proteins. pE2 is further processed to mature E3 and E2 by host furin in trans-Golgi vesicle. In terms of processing, phosphorylated on serine and threonine residues. Post-translationally, palmitoylated via thioester bonds. These palmitoylations may induce disruption of the C-terminus transmembrane. This would result in the reorientation of E2 C-terminus from lumenal to cytoplasmic side. N-glycosylated. In terms of processing, palmitoylated via thioester bonds.

It is found in the virion. The protein resides in the host cytoplasm. The protein localises to the host cell membrane. It localises to the host nucleus. Its subcellular location is the virion membrane. It is found in the host Golgi apparatus. The protein resides in the host trans-Golgi network. The protein localises to the host endoplasmic reticulum. It carries out the reaction Autocatalytic release of the core protein from the N-terminus of the togavirus structural polyprotein by hydrolysis of a -Trp-|-Ser- bond.. In terms of biological role, forms an icosahedral capsid with a T=4 symmetry composed of 240 copies of the capsid protein surrounded by a lipid membrane through which penetrate 80 spikes composed of trimers of E1-E2 heterodimers. The capsid protein binds to the viral RNA genome at a site adjacent to a ribosome binding site for viral genome translation following genome release. Possesses a protease activity that results in its autocatalytic cleavage from the nascent structural protein. Following its self-cleavage, the capsid protein transiently associates with ribosomes, and within several minutes the protein binds to viral RNA and rapidly assembles into icosahedric core particles. The resulting nucleocapsid eventually associates with the cytoplasmic domain of the spike glycoprotein E2 at the cell membrane, leading to budding and formation of mature virions. In case of infection, new virions attach to target cells and after clathrin-mediated endocytosis their membrane fuses with the host endosomal membrane. This leads to the release of the nucleocapsid into the cytoplasm, followed by an uncoating event necessary for the genomic RNA to become accessible. The uncoating might be triggered by the interaction of capsid proteins with ribosomes. Binding of ribosomes would release the genomic RNA since the same region is genomic RNA-binding and ribosome-binding. Specifically inhibits interleukin-1 receptor-associated kinase 1/IRAK1-dependent signaling during viral entry, representing a means by which the alphaviruses may evade innate immune detection and activation prior to viral gene expression. Inhibits host transcription. Forms a tetrameric complex with XPO1/CRM1 and the nuclear import receptor importin. This complex blocks the central channel of host nuclear pores thereby inhibiting the receptor-mediated nuclear transport and thus the host mRNA and rRNA transcription. The inhibition of transcription is linked to a cytopathic effect on the host cell. Its function is as follows. Provides the signal sequence for the translocation of the precursor of protein E3/E2 to the host endoplasmic reticulum. Furin-cleaved E3 remains associated with spike glycoprotein E1 and mediates pH protection of the latter during the transport via the secretory pathway. After virion release from the host cell, the assembly protein E3 is gradually released in the extracellular space. Functionally, plays a role in viral attachment to target host cell, by binding to the cell receptor LDLRAD3. Synthesized as a p62 precursor which is processed by furin at the cell membrane just before virion budding, giving rise to E2-E1 heterodimer. The p62-E1 heterodimer is stable, whereas E2-E1 is unstable and dissociate at low pH. p62 is processed at the last step, presumably to avoid E1 fusion activation before its final export to cell surface. E2 C-terminus contains a transitory transmembrane that would be disrupted by palmitoylation, resulting in reorientation of the C-terminal tail from lumenal to cytoplasmic side. This step is critical since E2 C-terminus is involved in budding by interacting with capsid proteins. This release of E2 C-terminus in cytoplasm occurs lately in protein export, and precludes premature assembly of particles at the endoplasmic reticulum membrane. Acts as a viroporin that participates in virus glycoprotein processing and transport to the plasma membrane, cell permeabilization and budding of viral particles. Disrupts the calcium homeostasis of the cell, probably at the endoplasmic reticulum level. This leads to cytoplasmic calcium elevation. Because of its lipophilic properties, the 6K protein is postulated to influence the selection of lipids that interact with the transmembrane domains of the glycoproteins, which, in turn, affects the deformability of the bilayer required for the extreme curvature that occurs as budding proceeds. Present in low amount in virions, about 3% compared to viral glycoproteins. In terms of biological role, class II viral fusion protein. Fusion activity is inactive as long as E1 is bound to E2 in mature virion. After virus attachment to cell receptor LDLRAD3 and endocytosis, acidification of the endosome induce dissociation of E1/E2 heterodimer and concomitant trimerization of the E1 subunits. This E1 trimer is fusion active, and promotes release of viral nucleocapsid in cytoplasm after endosome and viral membrane fusion. Efficient fusion requires the presence of cholesterol and sphingolipid in the target membrane. The protein is Structural polyprotein of Venezuelan equine encephalitis virus (strain Mena II) (VEEV).